Reading from the N-terminus, the 940-residue chain is Isoleucine--tRNA ligase (940 aa).

Residues 58-68 carry the 'HIGH' region motif; it reads PYANGSIHIGH. Residue E564 participates in L-isoleucyl-5'-AMP binding. The short motif at 605 to 609 is the 'KMSKS' region element; sequence KMSKS. An ATP-binding site is contributed by K608. The Zn(2+) site is built by C903, C906, C923, and C926.

Belongs to the class-I aminoacyl-tRNA synthetase family. IleS type 1 subfamily. Monomer. It depends on Zn(2+) as a cofactor.

Its subcellular location is the cytoplasm. The enzyme catalyses tRNA(Ile) + L-isoleucine + ATP = L-isoleucyl-tRNA(Ile) + AMP + diphosphate. In terms of biological role, catalyzes the attachment of isoleucine to tRNA(Ile). As IleRS can inadvertently accommodate and process structurally similar amino acids such as valine, to avoid such errors it has two additional distinct tRNA(Ile)-dependent editing activities. One activity is designated as 'pretransfer' editing and involves the hydrolysis of activated Val-AMP. The other activity is designated 'posttransfer' editing and involves deacylation of mischarged Val-tRNA(Ile). The protein is Isoleucine--tRNA ligase of Shewanella sediminis (strain HAW-EB3).